A 227-amino-acid chain; its full sequence is Cytochrome c oxidase subunit 2 (227 aa).

Topologically, residues 1–14 are mitochondrial intermembrane; sequence MAHPVQLGFQDAAS. The helical transmembrane segment at 15-45 threads the bilayer; the sequence is PIMEELLYFHDHTLMIMFLISSLVLYIISLM. Residues 46–59 lie on the Mitochondrial matrix side of the membrane; sequence LTTKLTHTSTMDAQ. A helical transmembrane segment spans residues 60-87; sequence EVETVWTILPAAILILIALPSLRILYMM. Residues 88 to 227 lie on the Mitochondrial intermembrane side of the membrane; the sequence is DEITSPSLTL…HFEEWLLFTL (140 aa). Cu cation contacts are provided by His-161, Cys-196, Glu-198, Cys-200, His-204, and Met-207. Residue Glu-198 coordinates Mg(2+).

This sequence belongs to the cytochrome c oxidase subunit 2 family. Component of the cytochrome c oxidase (complex IV, CIV), a multisubunit enzyme composed of 14 subunits. The complex is composed of a catalytic core of 3 subunits MT-CO1, MT-CO2 and MT-CO3, encoded in the mitochondrial DNA, and 11 supernumerary subunits COX4I, COX5A, COX5B, COX6A, COX6B, COX6C, COX7A, COX7B, COX7C, COX8 and NDUFA4, which are encoded in the nuclear genome. The complex exists as a monomer or a dimer and forms supercomplexes (SCs) in the inner mitochondrial membrane with NADH-ubiquinone oxidoreductase (complex I, CI) and ubiquinol-cytochrome c oxidoreductase (cytochrome b-c1 complex, complex III, CIII), resulting in different assemblies (supercomplex SCI(1)III(2)IV(1) and megacomplex MCI(2)III(2)IV(2)). Found in a complex with TMEM177, COA6, COX18, COX20, SCO1 and SCO2. Interacts with TMEM177 in a COX20-dependent manner. Interacts with COX20. Interacts with COX16. Cu cation is required as a cofactor.

The protein localises to the mitochondrion inner membrane. The catalysed reaction is 4 Fe(II)-[cytochrome c] + O2 + 8 H(+)(in) = 4 Fe(III)-[cytochrome c] + 2 H2O + 4 H(+)(out). Component of the cytochrome c oxidase, the last enzyme in the mitochondrial electron transport chain which drives oxidative phosphorylation. The respiratory chain contains 3 multisubunit complexes succinate dehydrogenase (complex II, CII), ubiquinol-cytochrome c oxidoreductase (cytochrome b-c1 complex, complex III, CIII) and cytochrome c oxidase (complex IV, CIV), that cooperate to transfer electrons derived from NADH and succinate to molecular oxygen, creating an electrochemical gradient over the inner membrane that drives transmembrane transport and the ATP synthase. Cytochrome c oxidase is the component of the respiratory chain that catalyzes the reduction of oxygen to water. Electrons originating from reduced cytochrome c in the intermembrane space (IMS) are transferred via the dinuclear copper A center (CU(A)) of subunit 2 and heme A of subunit 1 to the active site in subunit 1, a binuclear center (BNC) formed by heme A3 and copper B (CU(B)). The BNC reduces molecular oxygen to 2 water molecules using 4 electrons from cytochrome c in the IMS and 4 protons from the mitochondrial matrix. The protein is Cytochrome c oxidase subunit 2 (MT-CO2) of Varecia variegata (Black-and-white ruffed lemur).